The sequence spans 400 residues: Tyrosine-specific transport system 1 (400 aa).

12 consecutive transmembrane segments (helical) span residues 5-25 (VGST…AMPL), 34-54 (FTLV…LLFV), 80-100 (IIAT…YISG), 117-137 (VSVL…THSV), 143-163 (VLFF…LPEI), 176-196 (ALII…GSIP), 211-231 (FSIL…QLST), 250-270 (LNGL…ASAV), 273-293 (FSTL…LECI), 313-333 (LTFI…ILAL), 335-355 (YAGQ…VWKA), and 370-390 (NLTL…PFAI).

This sequence belongs to the amino acid/polyamine transporter 2 family. Mtr/TnaB/TyrP permease subfamily.

The protein resides in the cell inner membrane. It carries out the reaction L-tyrosine(in) + H(+)(in) = L-tyrosine(out) + H(+)(out). In terms of biological role, transports tyrosine across the cytoplasmic membrane. The transport system is energized by the proton motive force. The polypeptide is Tyrosine-specific transport system 1 (tyrP-A) (Haemophilus influenzae (strain ATCC 51907 / DSM 11121 / KW20 / Rd)).